We begin with the raw amino-acid sequence, 417 residues long: Gamma-glutamyl phosphate reductase (417 aa).

The protein belongs to the gamma-glutamyl phosphate reductase family.

It localises to the cytoplasm. The catalysed reaction is L-glutamate 5-semialdehyde + phosphate + NADP(+) = L-glutamyl 5-phosphate + NADPH + H(+). It participates in amino-acid biosynthesis; L-proline biosynthesis; L-glutamate 5-semialdehyde from L-glutamate: step 2/2. In terms of biological role, catalyzes the NADPH-dependent reduction of L-glutamate 5-phosphate into L-glutamate 5-semialdehyde and phosphate. The product spontaneously undergoes cyclization to form 1-pyrroline-5-carboxylate. This is Gamma-glutamyl phosphate reductase from Serratia proteamaculans (strain 568).